We begin with the raw amino-acid sequence, 86 residues long: MAKKSLNETSPVARFEQSLEELEQLVQKMEVGDLSLEQSLTAYERGIGLYRDCQQTLEQAELRVRLLTDPARPELAEAFEPPSLDG.

Belongs to the XseB family. Heterooligomer composed of large and small subunits.

It localises to the cytoplasm. The catalysed reaction is Exonucleolytic cleavage in either 5'- to 3'- or 3'- to 5'-direction to yield nucleoside 5'-phosphates.. Functionally, bidirectionally degrades single-stranded DNA into large acid-insoluble oligonucleotides, which are then degraded further into small acid-soluble oligonucleotides. The protein is Exodeoxyribonuclease 7 small subunit of Xanthomonas euvesicatoria pv. vesicatoria (strain 85-10) (Xanthomonas campestris pv. vesicatoria).